A 363-amino-acid polypeptide reads, in one-letter code: Chorismate synthase (363 aa).

2 residues coordinate NADP(+): Arg-48 and Arg-54. Residues 125 to 127 (RSS), 237 to 238 (NA), Gly-277, 292 to 296 (KPTSS), and Arg-318 contribute to the FMN site.

This sequence belongs to the chorismate synthase family. In terms of assembly, homotetramer. Requires FMNH2 as cofactor.

It catalyses the reaction 5-O-(1-carboxyvinyl)-3-phosphoshikimate = chorismate + phosphate. Its pathway is metabolic intermediate biosynthesis; chorismate biosynthesis; chorismate from D-erythrose 4-phosphate and phosphoenolpyruvate: step 7/7. Functionally, catalyzes the anti-1,4-elimination of the C-3 phosphate and the C-6 proR hydrogen from 5-enolpyruvylshikimate-3-phosphate (EPSP) to yield chorismate, which is the branch point compound that serves as the starting substrate for the three terminal pathways of aromatic amino acid biosynthesis. This reaction introduces a second double bond into the aromatic ring system. This Pseudomonas putida (strain GB-1) protein is Chorismate synthase.